The primary structure comprises 200 residues: Neutrophil gelatinase-associated lipocalin (200 aa).

The first 20 residues, 1 to 20, serve as a signal peptide directing secretion; the sequence is MALSVMCLGLALLGVLQSQA. The residue at position 21 (glutamine 21) is a Pyrrolidone carboxylic acid. 72–74 provides a ligand contact to a carboxymycobactin; that stretch reads YST. N-linked (GlcNAc...) asparagine glycosylation is found at asparagine 81 and asparagine 85. Cysteine 98 and cysteine 197 form a disulfide bridge. Tyrosine 128 is an enterobactin binding site. A carboxymycobactin contacts are provided by lysine 147, lysine 156, and tyrosine 160. Lysine 156 serves as a coordination point for enterobactin.

It belongs to the calycin superfamily. Lipocalin family. Monomer. Homodimer; disulfide-linked. Heterodimer; disulfide-linked with MMP9. Post-translationally, N-glycosylated. As to expression, expressed in the cortical tubules of the kidney (at protein level). Also expressed in the medullary tubules of the kidney. Detected in lung, spleen, uterus, vagina and epididymis.

The protein localises to the secreted. It is found in the cytoplasmic granule lumen. It localises to the cytoplasmic vesicle lumen. Iron-trafficking protein involved in multiple processes such as apoptosis, innate immunity and renal development. Binds iron through association with 2,3-dihydroxybenzoic acid (2,3-DHBA), a siderophore that shares structural similarities with bacterial enterobactin, and delivers or removes iron from the cell, depending on the context. Iron-bound form (holo-24p3) is internalized following binding to the SLC22A17 (24p3R) receptor, leading to release of iron and subsequent increase of intracellular iron concentration. In contrast, association of the iron-free form (apo-24p3) with the SLC22A17 (24p3R) receptor is followed by association with an intracellular siderophore, iron chelation and iron transfer to the extracellular medium, thereby reducing intracellular iron concentration. Involved in apoptosis due to interleukin-3 (IL3) deprivation: iron-loaded form increases intracellular iron concentration without promoting apoptosis, while iron-free form decreases intracellular iron levels, inducing expression of the proapoptotic protein BCL2L11/BIM, resulting in apoptosis. Involved in innate immunity; limits bacterial proliferation by sequestering iron bound to microbial siderophores, such as enterobactin. Can also bind siderophores from M.tuberculosis. The sequence is that of Neutrophil gelatinase-associated lipocalin (Lcn2) from Mus musculus (Mouse).